We begin with the raw amino-acid sequence, 467 residues long: Hydroxyacid-oxoacid transhydrogenase, mitochondrial (467 aa).

The residue at position 445 (Lys445) is an N6-acetyllysine. Residue Ser452 is modified to Phosphoserine.

This sequence belongs to the iron-containing alcohol dehydrogenase family. Hydroxyacid-oxoacid transhydrogenase subfamily. As to expression, expressed in kidney and liver.

The protein localises to the mitochondrion. The enzyme catalyses (S)-3-hydroxybutanoate + 2-oxoglutarate = (R)-2-hydroxyglutarate + acetoacetate. The catalysed reaction is 4-hydroxybutanoate + 2-oxoglutarate = (R)-2-hydroxyglutarate + succinate semialdehyde. Functionally, catalyzes the cofactor-independent reversible oxidation of gamma-hydroxybutyrate (GHB) to succinic semialdehyde (SSA) coupled to reduction of 2-ketoglutarate (2-KG) to D-2-hydroxyglutarate (D-2-HG). L-3-hydroxybutyrate (L-3-OHB) is also a substrate for HOT when using 2-KG as hydrogen acceptor, resulting in the formation of D-2-HG. The polypeptide is Hydroxyacid-oxoacid transhydrogenase, mitochondrial (Adhfe1) (Rattus norvegicus (Rat)).